The chain runs to 940 residues: Protein translocase subunit SecA 1 (940 aa).

Residues Gln83, 101-105 (GEGKT), and Asp490 each bind ATP. The segment at 856–940 (AEQGGTATAA…AKPPKSVKRR (85 aa)) is disordered.

It belongs to the SecA family. As to quaternary structure, monomer and homodimer. Part of the essential Sec protein translocation apparatus which comprises SecA, SecYEG and auxiliary proteins SecDF. Other proteins may also be involved.

It is found in the cell membrane. The protein localises to the cytoplasm. It catalyses the reaction ATP + H2O + cellular proteinSide 1 = ADP + phosphate + cellular proteinSide 2.. Its function is as follows. Part of the Sec protein translocase complex. Interacts with the SecYEG preprotein conducting channel. Has a central role in coupling the hydrolysis of ATP to the transfer of proteins into and across the cell membrane, serving as an ATP-driven molecular motor driving the stepwise translocation of polypeptide chains across the membrane. The polypeptide is Protein translocase subunit SecA 1 (Mycolicibacterium paratuberculosis (strain ATCC BAA-968 / K-10) (Mycobacterium paratuberculosis)).